Consider the following 555-residue polypeptide: CTP synthase (555 aa).

An amidoligase domain region spans residues 1-265 (MTRYIFITGG…GNRVCEKLNI (265 aa)). S13 is a CTP binding site. S13 lines the UTP pocket. ATP contacts are provided by residues 14-19 (SLGKGI) and D71. 2 residues coordinate Mg(2+): D71 and E139. CTP contacts are provided by residues 146–148 (DIE), 186–191 (KTKPTQ), and K222. UTP-binding positions include 186–191 (KTKPTQ) and K222. The 252-residue stretch at 290–541 (TVAVVGKYVD…IKAGLAAKEA (252 aa)) folds into the Glutamine amidotransferase type-1 domain. An L-glutamine-binding site is contributed by G351. C378 serves as the catalytic Nucleophile; for glutamine hydrolysis. Residues 379 to 382 (LGMQ), E402, and R469 contribute to the L-glutamine site. Residues H514 and E516 contribute to the active site.

This sequence belongs to the CTP synthase family. In terms of assembly, homotetramer.

It catalyses the reaction UTP + L-glutamine + ATP + H2O = CTP + L-glutamate + ADP + phosphate + 2 H(+). The catalysed reaction is L-glutamine + H2O = L-glutamate + NH4(+). It carries out the reaction UTP + NH4(+) + ATP = CTP + ADP + phosphate + 2 H(+). The protein operates within pyrimidine metabolism; CTP biosynthesis via de novo pathway; CTP from UDP: step 2/2. With respect to regulation, allosterically activated by GTP, when glutamine is the substrate; GTP has no effect on the reaction when ammonia is the substrate. The allosteric effector GTP functions by stabilizing the protein conformation that binds the tetrahedral intermediate(s) formed during glutamine hydrolysis. Inhibited by the product CTP, via allosteric rather than competitive inhibition. In terms of biological role, catalyzes the ATP-dependent amination of UTP to CTP with either L-glutamine or ammonia as the source of nitrogen. Regulates intracellular CTP levels through interactions with the four ribonucleotide triphosphates. The chain is CTP synthase from Coxiella burnetii (strain RSA 493 / Nine Mile phase I).